A 213-amino-acid polypeptide reads, in one-letter code: Protein-L-isoaspartate O-methyltransferase (213 aa).

Residue Ser-64 is part of the active site.

This sequence belongs to the methyltransferase superfamily. L-isoaspartyl/D-aspartyl protein methyltransferase family.

It is found in the cytoplasm. The catalysed reaction is [protein]-L-isoaspartate + S-adenosyl-L-methionine = [protein]-L-isoaspartate alpha-methyl ester + S-adenosyl-L-homocysteine. Catalyzes the methyl esterification of L-isoaspartyl residues in peptides and proteins that result from spontaneous decomposition of normal L-aspartyl and L-asparaginyl residues. It plays a role in the repair and/or degradation of damaged proteins. This chain is Protein-L-isoaspartate O-methyltransferase, found in Flavobacterium psychrophilum (strain ATCC 49511 / DSM 21280 / CIP 103535 / JIP02/86).